Reading from the N-terminus, the 304-residue chain is Putative HTH-type transcriptional regulatory protein Memar_2347 (304 aa).

In terms of domain architecture, HTH cro/C1-type spans 132-189; the sequence is LREVRERFRMSLGDLASHLGVSRRTISKYESGMGTTLDVAIKLEEIFNAPLVETIELL. Residues 143–162 constitute a DNA-binding region (H-T-H motif); sequence LGDLASHLGVSRRTISKYES.

This chain is Putative HTH-type transcriptional regulatory protein Memar_2347, found in Methanoculleus marisnigri (strain ATCC 35101 / DSM 1498 / JR1).